A 358-amino-acid polypeptide reads, in one-letter code: Cinnamyl alcohol dehydrogenase 1 (358 aa).

Residues 21–349 (GILTPYTYTL…KNDVRYRFVV (329 aa)) enclose the Enoyl reductase (ER) domain. Residue cysteine 48 participates in Zn(2+) binding. Serine 50 is an NADP(+) binding site. Zn(2+)-binding residues include histidine 70, glutamate 71, cysteine 101, cysteine 104, cysteine 107, cysteine 115, and cysteine 164. NADP(+)-binding positions include threonine 168, 189-194 (GLGGVG), 212-217 (SSSDKK), threonine 252, glycine 276, and 299-301 (SFV).

This sequence belongs to the zinc-containing alcohol dehydrogenase family. In terms of assembly, homodimer. Zn(2+) is required as a cofactor.

It carries out the reaction (E)-cinnamyl alcohol + NADP(+) = (E)-cinnamaldehyde + NADPH + H(+). It catalyses the reaction (E)-coniferol + NADP(+) = (E)-coniferaldehyde + NADPH + H(+). The enzyme catalyses (E)-sinapyl alcohol + NADP(+) = (E)-sinapaldehyde + NADPH + H(+). The catalysed reaction is (E)-4-coumaroyl alcohol + NADP(+) = (E)-4-coumaraldehyde + NADPH + H(+). It functions in the pathway aromatic compound metabolism; phenylpropanoid biosynthesis. In terms of biological role, involved in lignin biosynthesis. Catalyzes the final step specific for the production of lignin monomers. Catalyzes the NADPH-dependent reduction of coniferaldehyde, 5-hydroxyconiferaldehyde, sinapaldehyde, 4-coumaraldehyde and caffeyl aldehyde to their respective alcohols. Can use coumaraldehyde and, with a lower efficiency, coniferaldehyde and sinapaldehyde as substrates. This chain is Cinnamyl alcohol dehydrogenase 1, found in Medicago truncatula (Barrel medic).